Here is a 591-residue protein sequence, read N- to C-terminus: 2-succinyl-5-enolpyruvyl-6-hydroxy-3-cyclohexene-1-carboxylate synthase (591 aa).

Belongs to the TPP enzyme family. MenD subfamily. In terms of assembly, homodimer. It depends on Mg(2+) as a cofactor. Mn(2+) serves as cofactor. Thiamine diphosphate is required as a cofactor.

The catalysed reaction is isochorismate + 2-oxoglutarate + H(+) = 5-enolpyruvoyl-6-hydroxy-2-succinyl-cyclohex-3-ene-1-carboxylate + CO2. The protein operates within quinol/quinone metabolism; 1,4-dihydroxy-2-naphthoate biosynthesis; 1,4-dihydroxy-2-naphthoate from chorismate: step 2/7. It functions in the pathway cofactor biosynthesis; phylloquinone biosynthesis. In terms of biological role, catalyzes the thiamine diphosphate-dependent decarboxylation of 2-oxoglutarate and the subsequent addition of the resulting succinic semialdehyde-thiamine pyrophosphate anion to isochorismate to yield 2-succinyl-5-enolpyruvyl-6-hydroxy-3-cyclohexene-1-carboxylate (SEPHCHC). The chain is 2-succinyl-5-enolpyruvyl-6-hydroxy-3-cyclohexene-1-carboxylate synthase from Rippkaea orientalis (strain PCC 8801 / RF-1) (Cyanothece sp. (strain PCC 8801)).